Consider the following 485-residue polypeptide: Pumilio domain-containing protein 6 (485 aa).

Disordered stretches follow at residues Asn29–His48 and Ser55–Pro76. Positions Ser55–Ser68 are enriched in polar residues. 8 Pumilio repeats span residues Glu86 to Glu124, Lys125 to Arg163, Gln164 to Gln200, Glu201 to Val236, His237 to Gln279, Cys287 to Asp324, Cys326 to Glu361, and Glu372 to Pro411. An RNA-binding region spans residues Phe439–Val454.

Its function is as follows. RNA-binding protein that binds to the consensus sequence 5'-CUCUGUAUCUUGU-3' in mRNA 3'-UTRs and modulates mRNA expression and stability. Functions redundantly with puf-5 and puf-7 in oocyte formation and organization, early embryonic cell divisions, and repression of expression of glp-1 and other maternal mRNAs in late oogenesis. This is Pumilio domain-containing protein 6 from Caenorhabditis elegans.